Reading from the N-terminus, the 410-residue chain is Cytochrome P450 (410 aa).

Cysteine 359 contributes to the heme binding site.

This sequence belongs to the cytochrome P450 family. Heme serves as cofactor.

This is Cytochrome P450 (cypA) from Bacillus subtilis (strain 168).